Reading from the N-terminus, the 324-residue chain is Germination protease (324 aa).

Residues 1–10 constitute a propeptide that is removed on maturation; the sequence is MIIVLGIRTD.

This sequence belongs to the peptidase A25 family. In terms of assembly, homotetramer. Post-translationally, autoproteolytically processed. The inactive tetrameric zymogen termed p46 autoprocesses to a smaller form termed p41, which is active only during spore germination.

The enzyme catalyses Endopeptidase action with P4 Glu or Asp, P1 preferably Glu &gt; Asp, P1' hydrophobic and P2' Ala.. Functionally, initiates the rapid degradation of small, acid-soluble proteins during spore germination. The chain is Germination protease from Caldanaerobacter subterraneus subsp. tengcongensis (strain DSM 15242 / JCM 11007 / NBRC 100824 / MB4) (Thermoanaerobacter tengcongensis).